Here is a 635-residue protein sequence, read N- to C-terminus: Cationic amino acid transporter 2, vacuolar (635 aa).

The Cytoplasmic portion of the chain corresponds to 1–48 (MGFLVDTQKEGGGHSWGYVRSLVRRKQVDSANGQSHGHQLARALTVPH). A helical membrane pass occupies residues 49–69 (LVAIGVGATIGAGVYILVGTV). At 70–76 (AREHSGP) the chain is on the vacuolar side. Residues 77-97 (SLALSFLIAGIAAGLSAFCYA) traverse the membrane as a helical segment. Residues 98 to 108 (ELSSRCPSAGS) lie on the Cytoplasmic side of the membrane. The chain crosses the membrane as a helical span at residues 109 to 131 (AYHYSYICVGEGVAWIIGWALIL). Residues 132–171 (EYTIGGSAVARGISPNLALIFGGEDGLPAILARHQIPGLD) lie on the Vacuolar side of the membrane. A helical membrane pass occupies residues 172–192 (IVVDPCAAILVFVVTGLLCMG). Residues 193-200 (IKESTFAQ) are Cytoplasmic-facing. The helical transmembrane segment at 201–221 (GIVTAVNVCVLLFVIVAGSYL) threads the bilayer. Residues 222–235 (GFKTGWPGYELPTG) are Vacuolar-facing. A helical transmembrane segment spans residues 236 to 256 (FFPFGVDGMFAGSATVFFAFI). Residues 257-280 (GFDSVASTAEEVRNPQRDLPIGIG) lie on the Cytoplasmic side of the membrane. Residues 281–301 (LALLLCCSLYMMVSIVIVGLI) form a helical membrane-spanning segment. The Vacuolar portion of the chain corresponds to 302-324 (PYYAMDPDTPISSAFASHDMQWA). A helical membrane pass occupies residues 325-345 (VYLITLGAVMALCSALMGALL). At 346-376 (PQPRILMAMARDGLLPSIFSDINKRTQVPVK) the chain is on the cytoplasmic side. Residues 377–397 (ATVATGLCAATLAFFMDVSQL) form a helical membrane-spanning segment. Position 398 (Ala-398) is a topological domain, vacuolar. Residues 399–419 (GMVSVGTLLAFTMVAISVLIL) traverse the membrane as a helical segment. Over 420 to 493 (RYVPPDEQPL…CLVLSEETRR (74 aa)) the chain is Cytoplasmic. The chain crosses the membrane as a helical span at residues 494-514 (IVAGWSIMFTCVGAFLLSYAA). Topologically, residues 515–524 (SSLSFPGLIR) are vacuolar. Residues 525-545 (YPLCGVGGCLLLAGLIALSSI) form a helical membrane-spanning segment. At 546-560 (DQDDARHTFGHSGGY) the chain is on the cytoplasmic side. The chain crosses the membrane as a helical span at residues 561-581 (MCPFVPLLPIICILINMYLLV). At 582-585 (NLGS) the chain is on the vacuolar side. Residues 586 to 606 (ATWARVSVWLLIGVIVYVFYG) form a helical membrane-spanning segment. Topologically, residues 607–635 (RKNSSLANAVYVTTAHAEEIYREHEGSLA) are cytoplasmic.

This sequence belongs to the amino acid-polyamine-organocation (APC) superfamily. Cationic amino acid transporter (CAT) (TC 2.A.3.3) family. In terms of tissue distribution, expressed in roots, stems, flowers, leaves, and siliques.

Its subcellular location is the vacuole membrane. In terms of biological role, permease involved in the transport of the cationic amino acids. This Arabidopsis thaliana (Mouse-ear cress) protein is Cationic amino acid transporter 2, vacuolar (CAT2).